Reading from the N-terminus, the 392-residue chain is Glyceraldehyde-3-phosphate dehydrogenase A, chloroplastic (392 aa).

A chloroplast-targeting transit peptide spans 1–56; it reads NSSLQVSNKGFSEFSGLRTSSAIPFGRKTNDDLLSVVAFQTSVIGGGNSKRGVVEA. Residues 67 to 68, Asp91, and Arg136 each bind NADP(+); that span reads RI. Residues 208-210, Thr239, Arg254, 267-268, and Arg290 contribute to the D-glyceraldehyde 3-phosphate site; these read SCT and TG. Cys209 acts as the Nucleophile in catalysis. Position 372 (Asn372) interacts with NADP(+).

It belongs to the glyceraldehyde-3-phosphate dehydrogenase family. Tetramer of either four A chains (GAPDH 2) or two A and two B chains (GAPDH 1).

Its subcellular location is the plastid. It localises to the chloroplast. It catalyses the reaction D-glyceraldehyde 3-phosphate + phosphate + NADP(+) = (2R)-3-phospho-glyceroyl phosphate + NADPH + H(+). It participates in carbohydrate biosynthesis; Calvin cycle. The protein is Glyceraldehyde-3-phosphate dehydrogenase A, chloroplastic (GAPA) of Nicotiana tabacum (Common tobacco).